A 102-amino-acid polypeptide reads, in one-letter code: Membrane-bound protein LytA (102 aa).

Residues 1–16 (MKKFIALLFFILLLSG) form the signal peptide. Cys17 is lipidated: N-palmitoyl cysteine. Cys17 carries S-diacylglycerol cysteine lipidation.

Its subcellular location is the cell membrane. Its function is as follows. Possible role in the secretion of LytB and LytC. The protein is Membrane-bound protein LytA (lytA) of Bacillus subtilis (strain 168).